The chain runs to 1237 residues: uncharacterized protein (1237 aa).

Residues 591–712 form the MHD1 domain; the sequence is KDMLEIYSDL…IVLSKYTQWT (122 aa). Residues 786-906 form the C2 domain; it reads LIEALDVAES…GDYLPREEWF (121 aa). In terms of domain architecture, MHD2 spans 1014 to 1130; that stretch reads EAAIYELLDY…KPTDFLLQEC (117 aa).

This is an uncharacterized protein from Schizosaccharomyces pombe (strain 972 / ATCC 24843) (Fission yeast).